Here is a 252-residue protein sequence, read N- to C-terminus: Cell division protein ZapD (252 aa).

This sequence belongs to the ZapD family. In terms of assembly, interacts with FtsZ.

It is found in the cytoplasm. Functionally, cell division factor that enhances FtsZ-ring assembly. Directly interacts with FtsZ and promotes bundling of FtsZ protofilaments, with a reduction in FtsZ GTPase activity. The protein is Cell division protein ZapD of Ralstonia nicotianae (strain ATCC BAA-1114 / GMI1000) (Ralstonia solanacearum).